Here is a 556-residue protein sequence, read N- to C-terminus: Valencene synthase (556 aa).

A compositionally biased stretch (polar residues) spans 1–12 (MSTQVSASSLAQ). Positions 1–24 (MSTQVSASSLAQIPQPKNRPVANF) are disordered. Mg(2+) is bound by residues D310, D314, and E462. A DDXXD motif motif is present at residues 310-314 (DDIHD).

Belongs to the terpene synthase family. Tpsa subfamily. Mg(2+) serves as cofactor. Expressed in flowers and anthers. Detected inside the pollen grains, but not in stems, leaves, tendrils, roots, seeds, pistils or caps.

It is found in the cytoplasm. It carries out the reaction (2E,6E)-farnesyl diphosphate = (+)-valencene + diphosphate. It catalyses the reaction (2E,6E)-farnesyl diphosphate = (-)-7-epi-alpha-selinene + diphosphate. Its pathway is secondary metabolite biosynthesis; terpenoid biosynthesis. In terms of biological role, involved in the biosynthesis of valencene, a major volatile emitted from flowers of grapevine. Can use farnesyl diphosphate as substrate, but not geranyl diphosphate or geranylgeranyl diphosphate. Produces mainly (+)-valencene and (-)-7-epi-alpha-selinene along with five minor products. This chain is Valencene synthase (ValCS), found in Vitis vinifera (Grape).